A 396-amino-acid chain; its full sequence is Small ribosomal subunit protein uS9m (396 aa).

The tract at residues 374-396 (PRVRERKKPGQEGARRKFTWKKR) is disordered.

The protein belongs to the universal ribosomal protein uS9 family. Component of the mitochondrial ribosome small subunit (28S) which comprises a 12S rRNA and about 30 distinct proteins.

It is found in the mitochondrion. The chain is Small ribosomal subunit protein uS9m (MRPS9) from Bos taurus (Bovine).